The sequence spans 269 residues: 5'-nucleotidase SurE (269 aa).

4 residues coordinate a divalent metal cation: Asp-11, Asp-12, Ser-43, and Asn-101.

The protein belongs to the SurE nucleotidase family. The cofactor is a divalent metal cation.

It is found in the cytoplasm. It carries out the reaction a ribonucleoside 5'-phosphate + H2O = a ribonucleoside + phosphate. Its function is as follows. Nucleotidase that shows phosphatase activity on nucleoside 5'-monophosphates. This Prochlorococcus marinus (strain MIT 9303) protein is 5'-nucleotidase SurE.